The following is a 532-amino-acid chain: 2-isopropylmalate synthase (532 aa).

One can recognise a Pyruvate carboxyltransferase domain in the interval 5–267 (VIIFDTTLRD…HTNINHQEIY (263 aa)). Asp-14, His-202, His-204, and Asn-238 together coordinate Mn(2+). The tract at residues 392–532 (HLDYFSVQSG…SKQQNSQETV (141 aa)) is regulatory domain. Positions 513–532 (QQHNNQQQNDSKQQNSQETV) are disordered.

Belongs to the alpha-IPM synthase/homocitrate synthase family. LeuA type 1 subfamily. In terms of assembly, homodimer. It depends on Mn(2+) as a cofactor.

Its subcellular location is the cytoplasm. It carries out the reaction 3-methyl-2-oxobutanoate + acetyl-CoA + H2O = (2S)-2-isopropylmalate + CoA + H(+). It participates in amino-acid biosynthesis; L-leucine biosynthesis; L-leucine from 3-methyl-2-oxobutanoate: step 1/4. Catalyzes the condensation of the acetyl group of acetyl-CoA with 3-methyl-2-oxobutanoate (2-ketoisovalerate) to form 3-carboxy-3-hydroxy-4-methylpentanoate (2-isopropylmalate). The sequence is that of 2-isopropylmalate synthase from Pectobacterium atrosepticum (strain SCRI 1043 / ATCC BAA-672) (Erwinia carotovora subsp. atroseptica).